A 187-amino-acid polypeptide reads, in one-letter code: Putative adenylate kinase (187 aa).

G10, G12, K13, T14, and I15 together coordinate ATP. The tract at residues 30-53 is NMP; it reads SLSQFVIENKLYTEYDELRQSYII. The LID stretch occupies residues 103-113; it reads GRGWADIKVAE. R104 is an ATP binding site.

It belongs to the adenylate kinase family. AK6 subfamily. Interacts with uS11. Not a structural component of 40S pre-ribosomes, but transiently interacts with them by binding to uS11.

It catalyses the reaction AMP + ATP = 2 ADP. The enzyme catalyses ATP + H2O = ADP + phosphate + H(+). Functionally, broad-specificity nucleoside monophosphate (NMP) kinase that catalyzes the reversible transfer of the terminal phosphate group between nucleoside triphosphates and monophosphates. Also has ATPase activity. Involved in the late maturation steps of the 30S ribosomal particles, specifically 16S rRNA maturation. While NMP activity is not required for ribosome maturation, ATPase activity is. Associates transiently with small ribosomal subunit protein uS11. ATP hydrolysis breaks the interaction with uS11. May temporarily remove uS11 from the ribosome to enable a conformational change of the ribosomal RNA that is needed for the final maturation step of the small ribosomal subunit. In Saccharolobus islandicus (strain L.S.2.15 / Lassen #1) (Sulfolobus islandicus), this protein is Putative adenylate kinase.